The primary structure comprises 506 residues: MECATTATTPWERVRQRLREEIGEEKFTSWFARMDLDKLTADAVQLSVPTRFLKSWIQENYLPRIADIWAEESGAKRRVDLAVRNAFARPVALKANTVREVVTERTDMHSGDTRQQSARISDGRSTDARGADGRGSDARAVEPRAAAAALSDAVAGDVASGSPLDARLTFETFVVGKSNSLAFAAAKQVAESAPGSAPVFNPLYLHAAVGLGKTHLLQAIARAGAVGGRRTTYLTAERFMYGFVAALKTHSAIAFKDALRTIDTLVIDDLQFLKGNNLQQEFCHTLNALLDGGRQVVVAADCLPGELEHLDERVRSRLAGGLVVELAALEEDLRLEILKARYQTLTEQHPGFAVPAPVLEFLARSVGQSGRDLDGALNKLLAFNQLTGEPVTLEMAENAVKDLIRPTDPKRVRVDDILRVVAKHYNVSRADLLSQRRTATVVKPRQIAMYLAKTLTLRSLPEIGRRFGGRDHTTVLHAVRKIDGLVNADRALAEEIEVLKRLALEA.

The interval 1–77 (MECATTATTP…IWAEESGAKR (77 aa)) is domain I, interacts with DnaA modulators. Residues 77-162 (RRVDLAVRNA…AVAGDVASGS (86 aa)) are domain II. Composition is skewed to basic and acidic residues over residues 103 to 112 (TERTDMHSGD) and 121 to 142 (SDGR…RAVE). Residues 103 to 142 (TERTDMHSGDTRQQSARISDGRSTDARGADGRGSDARAVE) are disordered. A domain III, AAA+ region region spans residues 163-384 (PLDARLTFET…GALNKLLAFN (222 aa)). ATP contacts are provided by glycine 210, glycine 212, lysine 213, and threonine 214. Residues 385–506 (QLTGEPVTLE…EVLKRLALEA (122 aa)) form a domain IV, binds dsDNA region.

It belongs to the DnaA family. As to quaternary structure, oligomerizes as a right-handed, spiral filament on DNA at oriC.

It localises to the cytoplasm. Functionally, plays an essential role in the initiation and regulation of chromosomal replication. ATP-DnaA binds to the origin of replication (oriC) to initiate formation of the DNA replication initiation complex once per cell cycle. Binds the DnaA box (a 9 base pair repeat at the origin) and separates the double-stranded (ds)DNA. Forms a right-handed helical filament on oriC DNA; dsDNA binds to the exterior of the filament while single-stranded (ss)DNA is stabiized in the filament's interior. The ATP-DnaA-oriC complex binds and stabilizes one strand of the AT-rich DNA unwinding element (DUE), permitting loading of DNA polymerase. After initiation quickly degrades to an ADP-DnaA complex that is not apt for DNA replication. Binds acidic phospholipids. The polypeptide is Chromosomal replication initiator protein DnaA (Xanthobacter autotrophicus (strain ATCC BAA-1158 / Py2)).